Here is a 331-residue protein sequence, read N- to C-terminus: Glycerol-3-phosphate dehydrogenase [NAD(P)+] (331 aa).

4 residues coordinate NADPH: S11, F12, R32, and K106. Sn-glycerol 3-phosphate is bound by residues K106, G134, and S136. A138 provides a ligand contact to NADPH. Positions 189, 242, 252, 253, and 254 each coordinate sn-glycerol 3-phosphate. Residue K189 is the Proton acceptor of the active site. R253 lines the NADPH pocket. 2 residues coordinate NADPH: V277 and E279.

It belongs to the NAD-dependent glycerol-3-phosphate dehydrogenase family.

The protein localises to the cytoplasm. The catalysed reaction is sn-glycerol 3-phosphate + NAD(+) = dihydroxyacetone phosphate + NADH + H(+). The enzyme catalyses sn-glycerol 3-phosphate + NADP(+) = dihydroxyacetone phosphate + NADPH + H(+). Its pathway is membrane lipid metabolism; glycerophospholipid metabolism. In terms of biological role, catalyzes the reduction of the glycolytic intermediate dihydroxyacetone phosphate (DHAP) to sn-glycerol 3-phosphate (G3P), the key precursor for phospholipid synthesis. The protein is Glycerol-3-phosphate dehydrogenase [NAD(P)+] of Clostridium perfringens (strain SM101 / Type A).